Here is a 30-residue protein sequence, read N- to C-terminus: GIPCGESCVFIPCLTTVAGCSCKNKVCYRN.

Positions Gly-1–Asn-30 form a cross-link, cyclopeptide (Gly-Asn). 3 disulfide bridges follow: Cys-4/Cys-20, Cys-8/Cys-22, and Cys-13/Cys-27.

Post-translationally, this is a cyclic peptide.

In terms of biological role, probably participates in a plant defense mechanism. Has anti-HIV activity. The chain is Cycloviolin-C from Leonia cymosa (Sacha uba).